The following is a 946-amino-acid chain: Probable leucine-rich repeat receptor-like protein kinase At5g49770 (946 aa).

The N-terminal stretch at 1 to 25 is a signal peptide; the sequence is MKMSSRIGLFKLLILLFFQIYSVYA. Over 26–561 the chain is Extracellular; sequence FTDGSDFTAL…LEDSKTVSMK (536 aa). 14 LRR repeats span residues 67–91, 92–116, 118–140, 141–164, 166–191, 195–219, 221–244, 245–268, 269–293, 295–314, 316–340, 342–365, 367–387, and 389–407; these read DNRVVSISLTNRNLKGKLPTEISTL, SELQTLDLTGNPELSGPLPANIGNL, KLTFLSLMGCAFNGPIPDSIGNL, EQLTRLSLNLNKFSGTIPASMGRL, KLYWFDIADNQLEGKLPVSDGASLPG, LLQTGHFHFGNNKLSGEIPEKLFSS, MTLLHVLFDGNQFTGSIPESLGLV, QNLTVLRLDRNRLSGDIPSSLNNL, TNLQELHLSDNKFTGSLPNLTSLTS, YTLDVSNNPLALSPVPSWIP, LNSLSTLRLEDIQLDGPVPTSLFSP, QLQTVSLKHNLINTTLDLGTNYSK, LDFVDLRDNFITGYKSPANNP, and NVMLADNQVCQDPANQLSG. Asparagine 246, asparagine 267, and asparagine 287 each carry an N-linked (GlcNAc...) asparagine glycan. 2 N-linked (GlcNAc...) asparagine glycosylation sites follow: asparagine 354 and asparagine 362. N-linked (GlcNAc...) asparagine glycosylation is found at asparagine 415, asparagine 460, asparagine 489, and asparagine 514. The chain crosses the membrane as a helical span at residues 562–582; it reads VIIGVVVGVVVLLLLLALAGI. Residues 583–946 are Cytoplasmic-facing; the sequence is YALRQKKRAQ…YTGVFPTPKP (364 aa). In terms of domain architecture, Protein kinase spans 634-908; it reads FSDANDVGGG…EVVQELESIL (275 aa). ATP contacts are provided by residues 640–648 and lysine 662; that span reads VGGGGYGQV. Aspartate 758 functions as the Proton acceptor in the catalytic mechanism. Residues 919-946 form a disordered region; that stretch reads SATYEEASGDPYGRDSFEYTGVFPTPKP.

The protein belongs to the protein kinase superfamily. Ser/Thr protein kinase family.

It is found in the membrane. It carries out the reaction L-seryl-[protein] + ATP = O-phospho-L-seryl-[protein] + ADP + H(+). It catalyses the reaction L-threonyl-[protein] + ATP = O-phospho-L-threonyl-[protein] + ADP + H(+). This is Probable leucine-rich repeat receptor-like protein kinase At5g49770 from Arabidopsis thaliana (Mouse-ear cress).